We begin with the raw amino-acid sequence, 177 residues long: PLAC8-like protein 1 (177 aa).

It belongs to the cornifelin family.

This is PLAC8-like protein 1 (PLAC8L1) from Homo sapiens (Human).